Consider the following 205-residue polypeptide: MARAKICGLRTRETWLAATDAGADWVGFVFFPRSPRFVTIEALKAIGADARVPRVGLFVDPEPAAIEAVLKVQDLEFLQIYAGAEACRAMRARFGAKVWRAVGVASAADLPRDDEGLDGFLIESKPPRGADRPGGNATAFDWAVMQGWRAPAPWLLAGGLTPANVAAAVRASGAAAVDVSSGVESAPGEKSVPLIRDFVAAAHAA.

Belongs to the TrpF family.

It carries out the reaction N-(5-phospho-beta-D-ribosyl)anthranilate = 1-(2-carboxyphenylamino)-1-deoxy-D-ribulose 5-phosphate. Its pathway is amino-acid biosynthesis; L-tryptophan biosynthesis; L-tryptophan from chorismate: step 3/5. This chain is N-(5'-phosphoribosyl)anthranilate isomerase, found in Acidiphilium cryptum (strain JF-5).